We begin with the raw amino-acid sequence, 749 residues long: Dynamin-1-like protein (749 aa).

An N-acetylmethionine modification is found at methionine 1. In terms of domain architecture, Dynamin-type G spans 22 to 315; it reads IIQLPQIVVV…LMHHIRDCLP (294 aa). The interval 32-39 is G1 motif; that stretch reads GTQSSGKS. 32–40 contributes to the GTP binding site; sequence GTQSSGKSS. Residues 58–60 are G2 motif; the sequence is VTR. Residues 74 to 93 are disordered; the sequence is DKRKTTGEENDPATWKNSRH. The tract at residues 159 to 162 is G3 motif; that stretch reads DLPG. The interval 228–231 is G4 motif; sequence TKLD. Residues 228 to 234 and 259 to 262 contribute to the GTP site; these read TKLDLMD and NRSQ. Residues 258–261 form a G5 motif region; sequence VNRS. The segment at 357–502 is middle domain; the sequence is YCNTIEGTAK…NEMVHNLVAI (146 aa). The segment at 461-698 is interaction with GSK3B; it reads NYSTQELLRF…NHVKDTLQSE (238 aa). A b domain region spans residues 515 to 582; that stretch reads ADACGLMNNN…IQESRRETKN (68 aa). The disordered stretch occupies residues 536–604; sequence ELPSAVSRDK…QEPTTGNWRG (69 aa). At serine 542 the chain carries Phosphoserine. Glycyl lysine isopeptide (Lys-Gly) (interchain with G-Cter in SUMO) cross-links involve residues lysine 545 and lysine 548. Positions 550-567 are enriched in low complexity; sequence PSALAPASQEPSPAASAE. Phosphoserine is present on serine 561. Positions 568-581 are enriched in basic and acidic residues; sequence ADGKLIQESRRETK. Glycyl lysine isopeptide (Lys-Gly) (interchain with G-Cter in SUMO) cross-links involve residues lysine 571 and lysine 581. Residues threonine 598 and threonine 599 are each glycosylated (O-linked (GlcNAc) threonine). Residue lysine 607 forms a Glycyl lysine isopeptide (Lys-Gly) (interchain with G-Cter in SUMO) linkage. At lysine 610 the chain carries N6-acetyllysine; alternate. A Glycyl lysine isopeptide (Lys-Gly) (interchain with G-Cter in SUMO); alternate cross-link involves residue lysine 610. A Glycyl lysine isopeptide (Lys-Gly) (interchain with G-Cter in SUMO) cross-link involves residue lysine 619. Serine 620 carries the post-translational modification Phosphoserine. A Glycyl lysine isopeptide (Lys-Gly) (interchain with G-Cter in SUMO) cross-link involves residue lysine 621. The residue at position 629 (serine 629) is a Phosphoserine; by CDK1 and PINK1. Serine 650 is modified (phosphoserine; by CAMK1 and PKA). Cysteine 657 is modified (S-nitrosocysteine). One can recognise a GED domain in the interval 657 to 748; the sequence is CEVIERLIKS…IIAEIRETHL (92 aa). An important for homodimerization region spans residues 667–681; sequence YFLIVRKNIQDSVPK.

The protein belongs to the TRAFAC class dynamin-like GTPase superfamily. Dynamin/Fzo/YdjA family. In terms of assembly, homotetramer; dimerizes through the N-terminal GTP-middle region of one molecule binding to the GED domain of another DNM1L molecule. Oligomerizes in a GTP-dependent manner to form membrane-associated tubules with a spiral pattern. Interacts with GSK3B and MARCHF5. Interacts (via the GTPase and B domains) with UBE2I; the interaction promotes sumoylation of DNM1L, mainly in its B domain. Interacts with PPP3CA; the interaction dephosphorylates DNM1L and regulates its transition to mitochondria. Interacts with BCL2L1 isoform BCL-X(L) and CLTA; DNM1L and BCL2L1 isoform BCL-X(L) may form a complex in synaptic vesicles that also contains clathrin and MFF. Interacts with MFF; the interaction is inhinited by C11orf65/MFI. Interacts with FIS1. Interacts with MIEF2 and MIEF1; GTP-dependent, regulates GTP hydrolysis and DNM1L oligomerization. Interacts with PGAM5; this interaction leads to dephosphorylation at Ser-656 and activation of GTPase activity and eventually to mitochondria fragmentation. Interacts with RALBP1; during mitosis, recruits DNM1L to the mitochondrion and mediates its activation by the mitotic kinase cyclin B-CDK1. In terms of processing, phosphorylation/dephosphorylation events on two sites near the GED domain regulate mitochondrial fission. Phosphorylation on Ser-650 by CAMK1 and PKA inhibits the GTPase activity, leading to a defect in mitochondrial fission promoting mitochondrial elongation. Dephosphorylated on this site by PPP3CA which promotes mitochondrial fission. Phosphorylation on Ser-629 by CDK1 and PINK1 activates the GTPase activity and promotes mitochondrial fission. Phosphorylated in a circadian manner at Ser-650. Post-translationally, sumoylated on various lysine residues within the B domain, probably by MUL1. Sumoylation positively regulates mitochondrial fission. Desumoylated by SENP5 during G2/M transition of mitosis. Appears to be linked to its catalytic activity. S-nitrosylation increases DNM1L dimerization, mitochondrial fission and causes neuronal damage. In terms of processing, O-GlcNAcylation augments the level of the GTP-bound active form of DNM1L and induces translocation from the cytoplasm to mitochondria in cardiomyocytes. It also decreases phosphorylation at Ser-650. Post-translationally, ubiquitination by MARCHF5 affects mitochondrial morphology.

Its subcellular location is the cytoplasm. The protein localises to the cytosol. It localises to the golgi apparatus. The protein resides in the endomembrane system. It is found in the mitochondrion outer membrane. Its subcellular location is the peroxisome. The protein localises to the membrane. It localises to the clathrin-coated pit. The protein resides in the cytoplasmic vesicle. It is found in the secretory vesicle. Its subcellular location is the synaptic vesicle membrane. The enzyme catalyses GTP + H2O = GDP + phosphate + H(+). Functions in mitochondrial and peroxisomal division. Mediates membrane fission through oligomerization into membrane-associated tubular structures that wrap around the scission site to constrict and sever the mitochondrial membrane through a GTP hydrolysis-dependent mechanism. The specific recruitment at scission sites is mediated by membrane receptors like MFF, MIEF1 and MIEF2 for mitochondrial membranes. While the recruitment by the membrane receptors is GTP-dependent, the following hydrolysis of GTP induces the dissociation from the receptors and allows DNM1L filaments to curl into closed rings that are probably sufficient to sever a double membrane. Acts downstream of PINK1 to promote mitochondrial fission in a PRKN-dependent manner. Plays an important role in mitochondrial fission during mitosis. Through its function in mitochondrial division, ensures the survival of at least some types of postmitotic neurons, including Purkinje cells, by suppressing oxidative damage. Required for normal brain development, including that of cerebellum. Facilitates developmentally regulated apoptosis during neural tube formation. Required for a normal rate of cytochrome c release and caspase activation during apoptosis; this requirement may depend upon the cell type and the physiological apoptotic cues. Required for formation of endocytic vesicles. Proposed to regulate synaptic vesicle membrane dynamics through association with BCL2L1 isoform Bcl-X(L) which stimulates its GTPase activity in synaptic vesicles; the function may require its recruitment by MFF to clathrin-containing vesicles. Required for programmed necrosis execution. Rhythmic control of its activity following phosphorylation at Ser-650 is essential for the circadian control of mitochondrial ATP production. This chain is Dynamin-1-like protein, found in Bos taurus (Bovine).